A 196-amino-acid chain; its full sequence is Cilia- and flagella-associated protein 107 (196 aa).

Mn stretches follow at residues 47 to 62 (TPQC…MPDH) and 97 to 109 (ISTY…RHNY).

As to quaternary structure, microtubule inner protein component of sperm flagellar doublet microtubules.

The protein localises to the cytoplasm. It is found in the cytoskeleton. The protein resides in the cilium axoneme. Its subcellular location is the flagellum axoneme. In terms of biological role, microtubule inner protein (MIP) part of the dynein-decorated doublet microtubules (DMTs) in cilia axoneme, which is required for motile cilia beating. This chain is Cilia- and flagella-associated protein 107, found in Mus musculus (Mouse).